Here is a 671-residue protein sequence, read N- to C-terminus: Solute carrier family 5 member 4 (671 aa).

Topologically, residues 1 to 38 (MPAMGTALPRAMASTASVSTSTGSSELSSLSDNINNPA) are cytoplasmic. A helical transmembrane segment spans residues 39–59 (DISVIVIYFVVVMAVGVWAMV). The Extracellular portion of the chain corresponds to 60 to 65 (KTNRST). The chain crosses the membrane as a helical span at residues 66–86 (VGGFFLAGRSMTWWPMGASLF). Over 87-89 (ASN) the chain is Cytoplasmic. The helical transmembrane segment at 90 to 110 (IGSGHFVGLAGTGAATGIAVT) threads the bilayer. Residues 111 to 116 (AFESHS) lie on the Extracellular side of the membrane. Residues 117 to 137 (FALLLVLGWFFVPIYIKAGVM) traverse the membrane as a helical segment. The Cytoplasmic segment spans residues 138–159 (TMPEYLRKRFGGKRLQIYLSVL). The chain crosses the membrane as a helical span at residues 160–180 (SLFICVILTISADIFSGAIFI). A topological domain (extracellular) is located at residue Lys-181. A helical transmembrane segment spans residues 182 to 202 (LALGLDLYLAIFILLAITAVF). At 203–218 (TITGGLASVIYTDTLQ) the chain is on the cytoplasmic side. A helical transmembrane segment spans residues 219–239 (AIIMLVGSFILMIYAFVEVGG). Residues 240-288 (YESFTEKYMNAIPSVVEGDNLTISPKCYTPQPDSFHIFRDAVTGDIPWP) lie on the Extracellular side of the membrane. A helical transmembrane segment spans residues 289–309 (GTAFGMPITALWYWCINQVIV). The Cytoplasmic portion of the chain corresponds to 310-324 (QRCLCGKNMSHVKAA). The helical transmembrane segment at 325–345 (CIVCGYLKLLPIFFMVMPGMI) threads the bilayer. The Extracellular segment spans residues 346-378 (SRILYTDMVACVVPSECVKQCGVDVGCTNYAYP). A helical membrane pass occupies residues 379–399 (MLVLKLMPMGLRGLMLSVMLA). Topologically, residues 400–434 (SLMSSLTSIFNSASTLFTMDLYTKIRKKASERELL) are cytoplasmic. A helical transmembrane segment spans residues 435–455 (IAGRLFVSVLIVTSILWVPIV). Residues 456–467 (EVSQGGQLIHYT) are Extracellular-facing. Residues 468–488 (EAISSYLGPPIAAVFLVAIFC) traverse the membrane as a helical segment. Residues 489–494 (KRVNEQ) lie on the Cytoplasmic side of the membrane. A helical transmembrane segment spans residues 495-515 (GAFWGLMVGLVLGLIRMIAEF). Residues 516–537 (SYGTGSCLAPSSCPKVICGVHY) are Extracellular-facing. A helical membrane pass occupies residues 538–558 (LYYAIILFFVSILVILGVSYL). Over 559 to 650 (TKPIPDVHLY…DTSEKPFWRT (92 aa)) the chain is Cytoplasmic. Residues 583–593 (DLDAEDREENE) are compositionally biased toward acidic residues. Residues 583–604 (DLDAEDREENEADARTEEDQTE) are disordered. Residues 594 to 604 (ADARTEEDQTE) show a composition bias toward basic and acidic residues. The helical transmembrane segment at 651 to 671 (VVNVNVIVLLAVAAFFYGYFA) threads the bilayer.

This sequence belongs to the sodium:solute symporter (SSF) (TC 2.A.21) family.

Its subcellular location is the cell membrane. In terms of biological role, generates D-glucose-induced depolarization in a pH-dependent and Na(+)-independent manner, with activity in acidic conditions (pH 5) but not neutral conditions. The protein is Solute carrier family 5 member 4 of Rattus norvegicus (Rat).